Here is a 91-residue protein sequence, read N- to C-terminus: Small ribosomal subunit protein bS18 (91 aa).

Belongs to the bacterial ribosomal protein bS18 family. In terms of assembly, part of the 30S ribosomal subunit. Forms a tight heterodimer with protein bS6.

Its function is as follows. Binds as a heterodimer with protein bS6 to the central domain of the 16S rRNA, where it helps stabilize the platform of the 30S subunit. In Wolbachia pipientis wMel, this protein is Small ribosomal subunit protein bS18.